The sequence spans 511 residues: Phosphoenolpyruvate carboxylase (511 aa).

Belongs to the PEPCase type 2 family. In terms of assembly, homotetramer. Mg(2+) is required as a cofactor.

It catalyses the reaction oxaloacetate + phosphate = phosphoenolpyruvate + hydrogencarbonate. Functionally, catalyzes the irreversible beta-carboxylation of phosphoenolpyruvate (PEP) to form oxaloacetate (OAA), a four-carbon dicarboxylic acid source for the tricarboxylic acid cycle. The protein is Phosphoenolpyruvate carboxylase of Saccharolobus islandicus (strain M.16.27) (Sulfolobus islandicus).